Reading from the N-terminus, the 328-residue chain is Sialic acid-binding Ig-like lectin 15 (328 aa).

Residues 1–19 (MEKSIWLLACLAWVLPTGS) form the signal peptide. Residues 20 to 263 (FVRTKIDTTE…RFHGASGAST (244 aa)) lie on the Extracellular side of the membrane. One can recognise an Ig-like V-type domain in the interval 40 to 158 (PAQRWSMQVP…DVHDRYESRH (119 aa)). Cystine bridges form between Cys-64–Cys-142 and Cys-95–Cys-104. Arg-143 contributes to the N-acetylneuraminate binding site. Residues 168–251 (PRIVNISVLP…SLGRSEASVY (84 aa)) enclose the Ig-like C2-type domain. N-linked (GlcNAc...) asparagine glycosylation is present at Asn-172. Cys-187 and Cys-237 form a disulfide bridge. A helical membrane pass occupies residues 264–284 (VALLLGALGFKALLLLGVLAA). The Cytoplasmic portion of the chain corresponds to 285–328 (RAARRRPEHLDTPDTPPRSQAQESNYENLSQMNPRSPPATMCSP). The tract at residues 289-328 (RRPEHLDTPDTPPRSQAQESNYENLSQMNPRSPPATMCSP) is disordered. The span at 301 to 318 (PRSQAQESNYENLSQMNP) shows a compositional bias: polar residues.

It belongs to the immunoglobulin superfamily. SIGLEC (sialic acid binding Ig-like lectin) family. Interacts with TYROBP and HCST. As to expression, expressed in macrophage and/or dendritic cells of spleen and lymph nodes.

The protein localises to the membrane. Its function is as follows. Binds sialylated glycoproteins. The sequence is that of Sialic acid-binding Ig-like lectin 15 (SIGLEC15) from Homo sapiens (Human).